Reading from the N-terminus, the 190-residue chain is Endoribonuclease YbeY (190 aa).

Zn(2+) contacts are provided by H147, H151, and H157.

It belongs to the endoribonuclease YbeY family. Requires Zn(2+) as cofactor.

It localises to the cytoplasm. In terms of biological role, single strand-specific metallo-endoribonuclease involved in late-stage 70S ribosome quality control and in maturation of the 3' terminus of the 16S rRNA. The polypeptide is Endoribonuclease YbeY (Nitrobacter winogradskyi (strain ATCC 25391 / DSM 10237 / CIP 104748 / NCIMB 11846 / Nb-255)).